The chain runs to 255 residues: Thiazole synthase (255 aa).

K96 acts as the Schiff-base intermediate with DXP in catalysis. 1-deoxy-D-xylulose 5-phosphate contacts are provided by residues G157, 183–184 (AG), and 205–206 (NT).

The protein belongs to the ThiG family. As to quaternary structure, homotetramer. Forms heterodimers with either ThiH or ThiS.

The protein localises to the cytoplasm. The enzyme catalyses [ThiS sulfur-carrier protein]-C-terminal-Gly-aminoethanethioate + 2-iminoacetate + 1-deoxy-D-xylulose 5-phosphate = [ThiS sulfur-carrier protein]-C-terminal Gly-Gly + 2-[(2R,5Z)-2-carboxy-4-methylthiazol-5(2H)-ylidene]ethyl phosphate + 2 H2O + H(+). It functions in the pathway cofactor biosynthesis; thiamine diphosphate biosynthesis. Functionally, catalyzes the rearrangement of 1-deoxy-D-xylulose 5-phosphate (DXP) to produce the thiazole phosphate moiety of thiamine. Sulfur is provided by the thiocarboxylate moiety of the carrier protein ThiS. In vitro, sulfur can be provided by H(2)S. This is Thiazole synthase from Bacillus pumilus (strain SAFR-032).